Here is a 493-residue protein sequence, read N- to C-terminus: Amphoterin-induced protein 1 (493 aa).

Positions 1–27 are cleaved as a signal peptide; it reads MQPQRDLRGLWLLLLSLFLLLFEVARA. Residues 28–61 form the LRRNT domain; that stretch reads GRPVVSCPANCLCASNILSCSKQQLPNVPQSLPG. At 28–372 the chain is on the extracellular side; it reads GRPVVSCPAN…LHGHHDTLNT (345 aa). Intrachain disulfides connect Cys34/Cys40 and Cys38/Cys47. 6 LRR repeats span residues 62 to 83, 87 to 108, 111 to 132, 135 to 156, 159 to 179, and 186 to 206; these read YTAL…WTPT, NLHS…AFVP, NLRY…LFSG, ALEV…AFED, QLQK…ELIK, and KLTL…TDLQ. The N-linked (GlcNAc...) asparagine glycan is linked to Asn72. The LRRCT domain maps to 221–272; the sequence is NPLECDCKLYQLFSHWQYRQLSSVMDFQEDLYCVHSKKLHNVFSLDFFNCSE. 3 disulfides stabilise this stretch: Cys225–Cys253, Cys227–Cys270, and Cys290–Cys341. 4 N-linked (GlcNAc...) asparagine glycosylation sites follow: Asn269, Asn315, Asn349, and Asn360. The Ig-like C2-type domain maps to 269-353; that stretch reads NCSEYKESAW…MGETFNETLS (85 aa). Residues 373–393 form a helical membrane-spanning segment; the sequence is AYTTLVGCILSVVLVLIYLYL. Residues 394–493 lie on the Cytoplasmic side of the membrane; that stretch reads TPCRCWCRGV…SVFSDTPIVV (100 aa). A disordered region spans residues 405 to 493; it reads KPSSHQGDSL…SVFSDTPIVV (89 aa). The segment covering 408–424 has biased composition (polar residues); that stretch reads SHQGDSLSSSMLSTTPN. Over residues 431–442 the composition is skewed to basic and acidic residues; that stretch reads GDKDDGFDRRVA. Residues Ser477 and Ser481 each carry the phosphoserine modification.

The protein belongs to the immunoglobulin superfamily. AMIGO family. Homodimer, and heterodimer with AMIGO2 and AMIGO3. Interacts with KCNB1.

The protein resides in the cell membrane. Its subcellular location is the perikaryon. It localises to the cell projection. The protein localises to the dendrite. It is found in the axon. Promotes growth and fasciculation of neurites from cultured hippocampal neurons. May be involved in fasciculation as well as myelination of developing neural axons. May have a role in regeneration as well as neural plasticity in the adult nervous system. May mediate homophilic as well as heterophilic cell-cell interaction and contribute to signal transduction through its intracellular domain. Assembled with KCNB1 modulates the gating characteristics of the delayed rectifier voltage-dependent potassium channel KCNB1. In Rattus norvegicus (Rat), this protein is Amphoterin-induced protein 1.